The sequence spans 247 residues: Carboxy-S-adenosyl-L-methionine synthase (247 aa).

S-adenosyl-L-methionine is bound by residues tyrosine 39, 64–66, 89–90, 117–118, asparagine 132, and arginine 199; these read GCS, DN, and DI.

Belongs to the class I-like SAM-binding methyltransferase superfamily. Cx-SAM synthase family. As to quaternary structure, homodimer.

The catalysed reaction is prephenate + S-adenosyl-L-methionine = carboxy-S-adenosyl-L-methionine + 3-phenylpyruvate + H2O. Functionally, catalyzes the conversion of S-adenosyl-L-methionine (SAM) to carboxy-S-adenosyl-L-methionine (Cx-SAM). The protein is Carboxy-S-adenosyl-L-methionine synthase of Pectobacterium atrosepticum (strain SCRI 1043 / ATCC BAA-672) (Erwinia carotovora subsp. atroseptica).